Consider the following 383-residue polypeptide: Lipid-A-disaccharide synthase (383 aa).

It belongs to the LpxB family.

The catalysed reaction is a lipid X + a UDP-2-N,3-O-bis[(3R)-3-hydroxyacyl]-alpha-D-glucosamine = a lipid A disaccharide + UDP + H(+). It participates in bacterial outer membrane biogenesis; LPS lipid A biosynthesis. Functionally, condensation of UDP-2,3-diacylglucosamine and 2,3-diacylglucosamine-1-phosphate to form lipid A disaccharide, a precursor of lipid A, a phosphorylated glycolipid that anchors the lipopolysaccharide to the outer membrane of the cell. The chain is Lipid-A-disaccharide synthase from Syntrophus aciditrophicus (strain SB).